The primary structure comprises 321 residues: MSPLPRVNIDEPKYDQNSYLGRAKHFFLLTNPLNVLASASKLEEARQIVIKYRAGKDVPECKTIDDVWRAKYLYDSAFHPETGEKQIVIGRMAAQMPMNTIITGGMMAFYKSTPAVVFWQWFNQTFNAIVNYTNRSGTSPISQQQLVTSYCLATSGALVTALSLNHAVKNMNPLLGRLVPLVAVGAANCINIPCMRMQELRNGVTLFDEHSNEMGISKKAAVVGISTVILSRIAMAIPGMTLTPVLMNVLEKRGFLAKYPRSNAPIQTLFCGFVLIFATPLGCAFFKQRADIKVDSLESEVRDSIRKKRPELETVWFNKGL.

5 helical membrane-spanning segments follow: residues 101–121, 146–168, 174–194, 220–240, and 266–286; these read IITG…FWQW, LVTS…NHAV, LLGR…NIPC, AAVV…IPGM, and IQTL…CAFF.

This sequence belongs to the sideroflexin family.

It is found in the mitochondrion membrane. Functionally, mitochondrial amino-acid transporter that mediates transport of serine into mitochondria. This chain is Sideroflexin-1-3, found in Drosophila melanogaster (Fruit fly).